A 226-amino-acid polypeptide reads, in one-letter code: MSNEDLKLKVAKEAVKLVKDGMVIGLGTGSTAALFIRELGNRIREEELTVFGIPTSFEAKMLAMQYEIPLVTLDEYDVDIAFDGADEVEETTLFLIKGGGGCHTQEKIVDYNANEFVVLVDESKLVKKLGEKFPIPVEVIPSAYRVVIRALSEMGGEAVIRLGDRKRGPVITDNGNMIIDVFMNIDDAIELEKEINNIPGVVENGIFTKVDKVLVGTKKGVKTLKK.

Residues 28–31, 83–86, and 97–100 contribute to the substrate site; these read TGST, DGAD, and KGGG. Catalysis depends on E106, which acts as the Proton acceptor. Substrate is bound at residue K124.

Belongs to the ribose 5-phosphate isomerase family. Homotetramer.

It catalyses the reaction aldehydo-D-ribose 5-phosphate = D-ribulose 5-phosphate. The protein operates within carbohydrate biosynthesis; D-ribose 5-phosphate biosynthesis. Its function is as follows. Catalyzes the reversible conversion of ribose-5-phosphate to ribulose 5-phosphate. The sequence is that of Ribose-5-phosphate isomerase A from Methanocaldococcus jannaschii (strain ATCC 43067 / DSM 2661 / JAL-1 / JCM 10045 / NBRC 100440) (Methanococcus jannaschii).